Reading from the N-terminus, the 337-residue chain is Holliday junction branch migration complex subunit RuvB (337 aa).

Residues 4 to 185 are large ATPase domain (RuvB-L); the sequence is ADRLISNSFE…FGITQRLEYY (182 aa). Residues isoleucine 24, arginine 25, glycine 66, lysine 69, threonine 70, threonine 71, 132–134, arginine 175, tyrosine 185, and arginine 222 contribute to the ATP site; that span reads EDY. Threonine 70 is a Mg(2+) binding site. A small ATPAse domain (RuvB-S) region spans residues 186-256; it reads KVDDLKDIVQ…TAKKALDMLD (71 aa). Residues 259–337 form a head domain (RuvB-H) region; that stretch reads SSGFDYMDRK…HFGLDIPEAR (79 aa). Positions 314 and 319 each coordinate DNA.

The protein belongs to the RuvB family. In terms of assembly, homohexamer. Forms an RuvA(8)-RuvB(12)-Holliday junction (HJ) complex. HJ DNA is sandwiched between 2 RuvA tetramers; dsDNA enters through RuvA and exits via RuvB. An RuvB hexamer assembles on each DNA strand where it exits the tetramer. Each RuvB hexamer is contacted by two RuvA subunits (via domain III) on 2 adjacent RuvB subunits; this complex drives branch migration. In the full resolvosome a probable DNA-RuvA(4)-RuvB(12)-RuvC(2) complex forms which resolves the HJ.

It is found in the cytoplasm. It carries out the reaction ATP + H2O = ADP + phosphate + H(+). The RuvA-RuvB-RuvC complex processes Holliday junction (HJ) DNA during genetic recombination and DNA repair, while the RuvA-RuvB complex plays an important role in the rescue of blocked DNA replication forks via replication fork reversal (RFR). RuvA specifically binds to HJ cruciform DNA, conferring on it an open structure. The RuvB hexamer acts as an ATP-dependent pump, pulling dsDNA into and through the RuvAB complex. RuvB forms 2 homohexamers on either side of HJ DNA bound by 1 or 2 RuvA tetramers; 4 subunits per hexamer contact DNA at a time. Coordinated motions by a converter formed by DNA-disengaged RuvB subunits stimulates ATP hydrolysis and nucleotide exchange. Immobilization of the converter enables RuvB to convert the ATP-contained energy into a lever motion, pulling 2 nucleotides of DNA out of the RuvA tetramer per ATP hydrolyzed, thus driving DNA branch migration. The RuvB motors rotate together with the DNA substrate, which together with the progressing nucleotide cycle form the mechanistic basis for DNA recombination by continuous HJ branch migration. Branch migration allows RuvC to scan DNA until it finds its consensus sequence, where it cleaves and resolves cruciform DNA. The sequence is that of Holliday junction branch migration complex subunit RuvB from Photobacterium profundum (strain SS9).